The sequence spans 803 residues: Bromodomain-containing protein 2 (803 aa).

Met1 bears the N-acetylmethionine mark. Thr6 carries the post-translational modification Phosphothreonine. Ser37 is subject to Phosphoserine. Positions 53–73 are disordered; the sequence is ALQLTPANPPPPEVSNPKKPG. Residues 74–180 form the Bromo 1 domain; it reads RVTNQLQYLH…KIFLQKVASM (107 aa). The a protein site is built by Asp112, Tyr155, Asn156, Lys157, Asp160, and Asp161. Disordered stretches follow at residues 268-348, 456-652, and 739-803; these read PPAQ…KLSE, EPLE…KRQL, and EKRL…SDSG. The span at 285 to 298 shows a compositional bias: low complexity; sequence TTTPTPTAILAPGS. Phosphoserine is present on residues Ser298 and Ser301. Residues 316–332 are compositionally biased toward basic and acidic residues; sequence VRRESGRPIKPPRKDLP. Residues 344-453 form the Bromo 2 domain; that stretch reads GKLSEQLKHC…DVFEFRYAKM (110 aa). Residues 481–515 are compositionally biased toward acidic residues; that stretch reads SSEESSSESSSEEEEEEDEDEEEEEEESESSDSEE. A compositionally biased stretch (basic residues) spans 545 to 567; sequence KPKRKREKKEKKKKRKAEKHRGR. The short motif at 556–560 is the Nuclear localization signal element; sequence KKKRK. The span at 623–632 shows a compositional bias: low complexity; the sequence is KTAPPALPAG. Residues 634–716 form the NET domain; sequence DSEEEEESRP…SCLRKKPRKP (83 aa). Phosphoserine is present on Ser635. Residues 641–652 are compositionally biased toward basic and acidic residues; that stretch reads SRPMSYDEKRQL. Residues 777 to 797 are compositionally biased toward low complexity; sequence SASSSSSDSSSSSSSSSSSDT.

This sequence belongs to the BET family. As to quaternary structure, homodimer. Interacts with E2F1. Interacts with (acetylated) STAT3; promoting STAT3 recruitment to chromatin. Interacts with CTCF; promoting BRD2 recruitment to chromatin.

It localises to the nucleus. The protein resides in the chromosome. Its function is as follows. Chromatin reader protein that specifically recognizes and binds histone H4 acetylated at 'Lys-5' and 'Lys-12' (H4K5ac and H4K12ac, respectively), thereby controlling gene expression and remodeling chromatin structures. Recruits transcription factors and coactivators to target gene sites, and activates RNA polymerase II machinery for transcriptional elongation. Plays a key role in genome compartmentalization via its association with CTCF and cohesin: recruited to chromatin by CTCF and promotes formation of topologically associating domains (TADs) via its ability to bind acetylated histones, contributing to CTCF boundary formation and enhancer insulation. Also recognizes and binds acetylated non-histone proteins, such as STAT3. Involved in inflammatory response by regulating differentiation of naive CD4(+) T-cells into T-helper Th17: recognizes and binds STAT3 acetylated at 'Lys-87', promoting STAT3 recruitment to chromatin. In addition to acetylated lysines, also recognizes and binds lysine residues on histones that are both methylated and acetylated on the same side chain to form N6-acetyl-N6-methyllysine (Kacme), an epigenetic mark of active chromatin associated with increased transcriptional initiation. Specifically binds histone H4 acetyl-methylated at 'Lys-5' and 'Lys-12' (H4K5acme and H4K12acme, respectively). This Bos taurus (Bovine) protein is Bromodomain-containing protein 2 (BRD2).